The following is a 455-amino-acid chain: Peroxisomal membrane protein PEX3 (455 aa).

The segment covering Thr113–Gly125 has biased composition (polar residues). Positions Thr113–Pro135 are disordered. Residues Phe155–Leu171 form a helical membrane-spanning segment.

The protein belongs to the peroxin-3 family. As to quaternary structure, component of the peroxisomal docking complex, composed of at least PEX3, PEX13, PEX14 and PEX17. Component of the peroxisomal translocation complex, composed of at least PEX3, PEX2, PEX10 and PEX12. Interacts with PEX19. Interacts with the pexophagy receptor ATG30.

The protein resides in the peroxisome membrane. Peroxisomal membrane protein required for peroxisome biosynthesis. Shared component of both the peroxisomal docking complex and the peroxisomal translocation complex. The two types of peroxisomal matrix targeting signals, PTS1 and PTS2, are first recognized in the cytosol by their receptors PEX5 and PEX7, respectively, which then carry the cargo to the peroxisomal membrane. The peroxisomal targeting signal (PTS) receptor-cargo complexes interact with peroxisomal membrane protein (PMP) components of the docking complex. They have then additional downstream interactions with the translocation complex, leading to the transport of fully folded and oligomerized cargo into the peroxisome matrix. PEX3 acts as an anchoring site for PEX19 on the peroxisomal membrane and thus plays a crucial role in the assembly of the peroxisomal translocation complex. Is also essential for the interaction between the two complexes. Finally. PEX3 activates selective autophagy of peroxisomes (pexophagy) via interaction with the pexophagy receptor ATG30. This is Peroxisomal membrane protein PEX3 from Komagataella pastoris (Yeast).